A 586-amino-acid chain; its full sequence is Aspartate--tRNA(Asp/Asn) ligase (586 aa).

E172 provides a ligand contact to L-aspartate. The aspartate stretch occupies residues 196-199 (QLYK). An L-aspartate-binding site is contributed by R218. ATP contacts are provided by residues 218 to 220 (RDE) and Q227. H446 provides a ligand contact to L-aspartate. E480 contributes to the ATP binding site. R487 is a binding site for L-aspartate. Residue 532-535 (GIDR) coordinates ATP.

The protein belongs to the class-II aminoacyl-tRNA synthetase family. Type 1 subfamily. Homodimer.

Its subcellular location is the cytoplasm. It catalyses the reaction tRNA(Asx) + L-aspartate + ATP = L-aspartyl-tRNA(Asx) + AMP + diphosphate. Functionally, aspartyl-tRNA synthetase with relaxed tRNA specificity since it is able to aspartylate not only its cognate tRNA(Asp) but also tRNA(Asn). Reaction proceeds in two steps: L-aspartate is first activated by ATP to form Asp-AMP and then transferred to the acceptor end of tRNA(Asp/Asn). This is Aspartate--tRNA(Asp/Asn) ligase from Borreliella afzelii (strain PKo) (Borrelia afzelii).